We begin with the raw amino-acid sequence, 151 residues long: Acidic phospholipase A2 1 (151 aa).

An N-terminal signal peptide occupies residues 1–27; it reads MYPAHLLVLLAVCVSLLGAASIPARPL. 7 cysteine pairs are disulfide-bonded: Cys-38–Cys-104, Cys-54–Cys-151, Cys-56–Cys-72, Cys-71–Cys-132, Cys-78–Cys-125, Cys-88–Cys-118, and Cys-111–Cys-123. Residues Tyr-55, Gly-57, and Gly-59 each contribute to the Ca(2+) site. The active site involves His-75. Asp-76 serves as a coordination point for Ca(2+). Residue Asp-126 is part of the active site.

The protein belongs to the phospholipase A2 family. Group I subfamily. D49 sub-subfamily. The cofactor is Ca(2+). In terms of tissue distribution, expressed by the venom gland.

The protein resides in the secreted. The enzyme catalyses a 1,2-diacyl-sn-glycero-3-phosphocholine + H2O = a 1-acyl-sn-glycero-3-phosphocholine + a fatty acid + H(+). Functionally, PLA2 catalyzes the calcium-dependent hydrolysis of the 2-acyl groups in 3-sn-phosphoglycerides. The protein is Acidic phospholipase A2 1 of Tropidechis carinatus (Australian rough-scaled snake).